The sequence spans 638 residues: 1-deoxy-D-xylulose-5-phosphate synthase (638 aa).

Thiamine diphosphate is bound by residues His-79 and 120–122 (GHS). Asp-151 is a Mg(2+) binding site. Thiamine diphosphate is bound by residues 152–153 (GA), Asn-182, Tyr-291, and Glu-373. Asn-182 lines the Mg(2+) pocket.

Belongs to the transketolase family. DXPS subfamily. Homodimer. The cofactor is Mg(2+). Thiamine diphosphate is required as a cofactor.

It carries out the reaction D-glyceraldehyde 3-phosphate + pyruvate + H(+) = 1-deoxy-D-xylulose 5-phosphate + CO2. Its pathway is metabolic intermediate biosynthesis; 1-deoxy-D-xylulose 5-phosphate biosynthesis; 1-deoxy-D-xylulose 5-phosphate from D-glyceraldehyde 3-phosphate and pyruvate: step 1/1. Catalyzes the acyloin condensation reaction between C atoms 2 and 3 of pyruvate and glyceraldehyde 3-phosphate to yield 1-deoxy-D-xylulose-5-phosphate (DXP). The chain is 1-deoxy-D-xylulose-5-phosphate synthase from Xanthomonas campestris pv. campestris (strain 8004).